Here is a 130-residue protein sequence, read N- to C-terminus: Small ribosomal subunit protein uS9 (130 aa).

The protein belongs to the universal ribosomal protein uS9 family.

The polypeptide is Small ribosomal subunit protein uS9 (Photorhabdus laumondii subsp. laumondii (strain DSM 15139 / CIP 105565 / TT01) (Photorhabdus luminescens subsp. laumondii)).